The sequence spans 84 residues: ATP synthase subunit c (84 aa).

2 consecutive transmembrane segments (helical) span residues 9–29 (IIGA…GFAI) and 54–74 (IVAG…LLFI).

The protein belongs to the ATPase C chain family. In terms of assembly, F-type ATPases have 2 components, F(1) - the catalytic core - and F(0) - the membrane proton channel. F(1) has five subunits: alpha(3), beta(3), gamma(1), delta(1), epsilon(1). F(0) has three main subunits: a(1), b(2) and c(10-14). The alpha and beta chains form an alternating ring which encloses part of the gamma chain. F(1) is attached to F(0) by a central stalk formed by the gamma and epsilon chains, while a peripheral stalk is formed by the delta and b chains.

The protein localises to the cell inner membrane. Functionally, f(1)F(0) ATP synthase produces ATP from ADP in the presence of a proton or sodium gradient. F-type ATPases consist of two structural domains, F(1) containing the extramembraneous catalytic core and F(0) containing the membrane proton channel, linked together by a central stalk and a peripheral stalk. During catalysis, ATP synthesis in the catalytic domain of F(1) is coupled via a rotary mechanism of the central stalk subunits to proton translocation. Key component of the F(0) channel; it plays a direct role in translocation across the membrane. A homomeric c-ring of between 10-14 subunits forms the central stalk rotor element with the F(1) delta and epsilon subunits. In Glaesserella parasuis serovar 5 (strain SH0165) (Haemophilus parasuis), this protein is ATP synthase subunit c.